Consider the following 708-residue polypeptide: Exocyst complex component 5 (708 aa).

A2 carries the N-acetylalanine modification. The stretch at 40 to 101 forms a coiled coil; the sequence is KRLLEEFVNH…AFQHFQELDE (62 aa). Residues T122, T395, and T405 each carry the phosphothreonine modification. S412 is modified (phosphoserine).

Belongs to the SEC10 family. The exocyst complex is composed of EXOC1, EXOC2, EXOC3, EXOC4, EXOC5, EXOC6, EXOC7 and EXOC8. Interacts with EXOC3L1.

Its subcellular location is the cytoplasm. The protein localises to the midbody. Component of the exocyst complex involved in the docking of exocytic vesicles with fusion sites on the plasma membrane. This chain is Exocyst complex component 5 (Exoc5), found in Mus musculus (Mouse).